A 117-amino-acid polypeptide reads, in one-letter code: MDKKATRLRRARRARAKIAELKVHRLSVHRTPRHMYAQIIAPDGGRTLVAASTVEKDLRSRAEGTGNCSAAAEVGRLIAERAKAAGVERVAFDRSGFKYHGRVKTLADAAREAGLQF.

It belongs to the universal ribosomal protein uL18 family. As to quaternary structure, part of the 50S ribosomal subunit; part of the 5S rRNA/L5/L18/L25 subcomplex. Contacts the 5S and 23S rRNAs.

Its function is as follows. This is one of the proteins that bind and probably mediate the attachment of the 5S RNA into the large ribosomal subunit, where it forms part of the central protuberance. The protein is Large ribosomal subunit protein uL18 of Alkalilimnicola ehrlichii (strain ATCC BAA-1101 / DSM 17681 / MLHE-1).